The chain runs to 238 residues: Pyridoxine 5'-phosphate synthase (238 aa).

Residue Asn7 participates in 3-amino-2-oxopropyl phosphate binding. 1-deoxy-D-xylulose 5-phosphate is bound at residue 9–10 (DH). Arg18 contacts 3-amino-2-oxopropyl phosphate. His43 serves as the catalytic Proton acceptor. Arg45 and His50 together coordinate 1-deoxy-D-xylulose 5-phosphate. Catalysis depends on Glu70, which acts as the Proton acceptor. Thr100 is a binding site for 1-deoxy-D-xylulose 5-phosphate. His190 serves as the catalytic Proton donor. Residues Gly191 and 212 to 213 (GH) each bind 3-amino-2-oxopropyl phosphate.

The protein belongs to the PNP synthase family. As to quaternary structure, homooctamer; tetramer of dimers.

The protein localises to the cytoplasm. It catalyses the reaction 3-amino-2-oxopropyl phosphate + 1-deoxy-D-xylulose 5-phosphate = pyridoxine 5'-phosphate + phosphate + 2 H2O + H(+). It participates in cofactor biosynthesis; pyridoxine 5'-phosphate biosynthesis; pyridoxine 5'-phosphate from D-erythrose 4-phosphate: step 5/5. Its function is as follows. Catalyzes the complicated ring closure reaction between the two acyclic compounds 1-deoxy-D-xylulose-5-phosphate (DXP) and 3-amino-2-oxopropyl phosphate (1-amino-acetone-3-phosphate or AAP) to form pyridoxine 5'-phosphate (PNP) and inorganic phosphate. This chain is Pyridoxine 5'-phosphate synthase, found in Prochlorococcus marinus (strain MIT 9515).